Reading from the N-terminus, the 70-residue chain is ATP synthase subunit c (70 aa).

2 helical membrane-spanning segments follow: residues 5–25 (AAGIAAGLAAVGGAIAVAIIV) and 47–67 (FIGVPLAEAVPIIAIVVSFIL).

The protein belongs to the ATPase C chain family. As to quaternary structure, F-type ATPases have 2 components, F(1) - the catalytic core - and F(0) - the membrane proton channel. F(1) has five subunits: alpha(3), beta(3), gamma(1), delta(1), epsilon(1). F(0) has three main subunits: a(1), b(2) and c(10-14). The alpha and beta chains form an alternating ring which encloses part of the gamma chain. F(1) is attached to F(0) by a central stalk formed by the gamma and epsilon chains, while a peripheral stalk is formed by the delta and b chains.

Its subcellular location is the cell membrane. Functionally, f(1)F(0) ATP synthase produces ATP from ADP in the presence of a proton or sodium gradient. F-type ATPases consist of two structural domains, F(1) containing the extramembraneous catalytic core and F(0) containing the membrane proton channel, linked together by a central stalk and a peripheral stalk. During catalysis, ATP synthesis in the catalytic domain of F(1) is coupled via a rotary mechanism of the central stalk subunits to proton translocation. In terms of biological role, key component of the F(0) channel; it plays a direct role in translocation across the membrane. A homomeric c-ring of between 10-14 subunits forms the central stalk rotor element with the F(1) delta and epsilon subunits. This chain is ATP synthase subunit c, found in Halalkalibacterium halodurans (strain ATCC BAA-125 / DSM 18197 / FERM 7344 / JCM 9153 / C-125) (Bacillus halodurans).